A 342-amino-acid chain; its full sequence is Isopentenyl-diphosphate delta-isomerase (342 aa).

Position 11 to 12 (11 to 12 (RK)) interacts with substrate. Residues Ser68, 69-71 (SMT), Ser99, and Asn127 contribute to the FMN site. 99–101 (SMR) serves as a coordination point for substrate. Position 162 (Gln162) interacts with substrate. Glu163 is a binding site for Mg(2+). Residues Lys194, Thr224, 274–276 (GLK), and 295–296 (AG) contribute to the FMN site.

Belongs to the IPP isomerase type 2 family. In terms of assembly, homooctamer. Dimer of tetramers. FMN serves as cofactor. NADPH is required as a cofactor. Requires Mg(2+) as cofactor.

It localises to the cytoplasm. The enzyme catalyses isopentenyl diphosphate = dimethylallyl diphosphate. Its function is as follows. Involved in the biosynthesis of isoprenoids. Catalyzes the 1,3-allylic rearrangement of the homoallylic substrate isopentenyl (IPP) to its allylic isomer, dimethylallyl diphosphate (DMAPP). The chain is Isopentenyl-diphosphate delta-isomerase from Rickettsia rickettsii (strain Iowa).